Consider the following 717-residue polypeptide: MLGKHTSPHTVPGHRAPWLSPGIFCLGLPFLLGWVGLLQGHPQCLDYGPPFRPPQHLDFCSDYDSFGCCDQRKDRRIAARYWDIMSYFDLKAHELCGGYIKDILCQECSPYAAHLYDAENPQTPLRNLPGLCSDYCSAFHRSCHSAISLLTNDRGLQESHGKDGARFCHLLNLPDEDYCFPNVLRNDQLNRNLGVVAEDQQGCLQLCLVEVANGLRNPVSMVHAGDGTHRFFVAEQVGVVWVYLPDGSRLEQPFLDLKSMVLTTPWIGDERGFLGLAFHPKFRHNRKFYIYYSCLGKRKVEKIRISEMKVSLSDGNRADPKSERVILEIDEPASNHNGGQLLFGLDGYLYIFTGDGGQAGDPFGKFGNAQNKSSLLGKVLRIDVNGADVDGQRYRVPLDNPFVSEPGAHPAVYAYGVRNMWRCAVDRGDPVTHRGRGRIFCGDVGQNKFEEVDLIVKGGNYGWRAKEGFECYDKRLCRNASLDDILPIYAYGHGVGKSVTGGYVYRGCESPNLNGLYIFGDFMSGRLMALQEDRKTQKWTKRDICLGNSTCAFPGLISAYSRFIISFAEDEAGELYFLATSYPSAYAPHGSIYKFVDPSRRAPPGKCKYKPVPVKTKSKKVRFRPLAATVLDLLKEESQKAARKASNATFTSSSDRVASQKGSLKKPASSRSSKKTFRRPGTKKKSRVWSPRPQGKRKPNLDSHGVGMRQAAGRSHP.

A signal peptide spans 1 to 40 (MLGKHTSPHTVPGHRAPWLSPGIFCLGLPFLLGWVGLLQG). Disulfide bonds link C203/C545, C207/C551, C423/C441, and C508/C607. A disordered region spans residues 642 to 717 (ARKASNATFT…MRQAAGRSHP (76 aa)). The segment covering 646 to 662 (SNATFTSSSDRVASQKG) has biased composition (polar residues). N647 is a glycosylation site (N-linked (GlcNAc...) asparagine). A compositionally biased stretch (basic residues) spans 672–687 (SSKKTFRRPGTKKKSR).

It belongs to the HHIP family.

The protein resides in the secreted. The chain is HHIP-like protein 2 (Hhipl2) from Mus musculus (Mouse).